Reading from the N-terminus, the 565-residue chain is DNA primase (565 aa).

The segment at 37 to 61 adopts a CHC2-type zinc-finger fold; the sequence is CPFHSETNPSFYVHPGLKIYHCFGC. The Toprim domain maps to 248-329; the sequence is GFFVITEGYF…NVLVATPSPY (82 aa). Mg(2+) contacts are provided by Glu254, Asp298, and Asp300.

Belongs to the DnaG primase family. As to quaternary structure, monomer. Interacts with DnaB. Requires Zn(2+) as cofactor. Mg(2+) is required as a cofactor.

The catalysed reaction is ssDNA + n NTP = ssDNA/pppN(pN)n-1 hybrid + (n-1) diphosphate.. RNA polymerase that catalyzes the synthesis of short RNA molecules used as primers for DNA polymerase during DNA replication. This is DNA primase from Thermotoga maritima (strain ATCC 43589 / DSM 3109 / JCM 10099 / NBRC 100826 / MSB8).